The following is a 546-amino-acid chain: Undecaprenyl phosphate-alpha-4-amino-4-deoxy-L-arabinose arabinosyl transferase (546 aa).

12 helical membrane-spanning segments follow: residues 6–26 (INLA…PLGL), 87–107 (AASA…VGRF), 113–133 (AWVT…GTYS), 177–197 (LLTK…PFMI), 208–228 (WGWW…LAIH), 260–280 (YYLP…PSAI), 289–309 (SPLL…FSAA), 313–333 (LVTY…QGII), 345–365 (IGSV…IVLF), 380–400 (PWLL…SIKA), 410–430 (YMLM…NISI), and 450–467 (AILI…NWYF).

It belongs to the glycosyltransferase 83 family.

It localises to the cell inner membrane. The enzyme catalyses 4-amino-4-deoxy-alpha-L-arabinopyranosyl di-trans,octa-cis-undecaprenyl phosphate + lipid IVA = lipid IIA + di-trans,octa-cis-undecaprenyl phosphate.. The protein operates within lipopolysaccharide metabolism; 4-amino-4-deoxy-beta-L-arabinose-lipid A biosynthesis. Functionally, catalyzes the transfer of the L-Ara4N moiety of the glycolipid undecaprenyl phosphate-alpha-L-Ara4N to lipid A. The modified arabinose is attached to lipid A and is required for resistance to polymyxin and cationic antimicrobial peptides. This is Undecaprenyl phosphate-alpha-4-amino-4-deoxy-L-arabinose arabinosyl transferase from Shewanella sediminis (strain HAW-EB3).